A 245-amino-acid polypeptide reads, in one-letter code: Probable transcriptional regulatory protein CPR_1922 (245 aa).

Belongs to the TACO1 family.

The protein resides in the cytoplasm. The sequence is that of Probable transcriptional regulatory protein CPR_1922 from Clostridium perfringens (strain SM101 / Type A).